The sequence spans 151 residues: 3-hydroxyacyl-[acyl-carrier-protein] dehydratase FabZ (151 aa).

Residue His56 is part of the active site.

The protein belongs to the thioester dehydratase family. FabZ subfamily.

It is found in the cytoplasm. The catalysed reaction is a (3R)-hydroxyacyl-[ACP] = a (2E)-enoyl-[ACP] + H2O. Functionally, involved in unsaturated fatty acids biosynthesis. Catalyzes the dehydration of short chain beta-hydroxyacyl-ACPs and long chain saturated and unsaturated beta-hydroxyacyl-ACPs. This Nitrobacter hamburgensis (strain DSM 10229 / NCIMB 13809 / X14) protein is 3-hydroxyacyl-[acyl-carrier-protein] dehydratase FabZ.